The chain runs to 165 residues: V-type proton ATPase 16 kDa proteolipid subunit (165 aa).

The Lumenal segment spans residues 1-12 (MSTVFNGDETAP). Residues 13 to 33 (FFGFLGAAAALVFSCMGAAYG) form a helical membrane-spanning segment. Topologically, residues 34–55 (TAKSGVGVASMGVMRPELVMKS) are cytoplasmic. A helical membrane pass occupies residues 56 to 76 (IVPVVMAGVLGIYGLIIAVII). The Lumenal portion of the chain corresponds to 77-95 (STGINPKAKSYYLFDGYAH). The helical transmembrane segment at 96–117 (LSSGLACGLAGLSAGMAIGIVG) threads the bilayer. Residues 118 to 129 (DAGVRANAQQPK) are Cytoplasmic-facing. Residues 130–155 (LFVGMILILIFAEALALYGLIVGIIL) traverse the membrane as a helical segment. The Lumenal portion of the chain corresponds to 156-165 (SSRAGQSRAD).

This sequence belongs to the V-ATPase proteolipid subunit family. V-ATPase is a heteromultimeric enzyme composed of a peripheral catalytic V1 complex (main components: subunits A, B, C, D, E, and F) attached to an integral membrane V0 proton pore complex (main component: the proteolipid protein; which is present as a hexamer that forms the proton-conducting pore).

The protein resides in the vacuole membrane. In terms of biological role, proton-conducting pore forming subunit of the membrane integral V0 complex of vacuolar ATPase. V-ATPase is responsible for acidifying a variety of intracellular compartments in eukaryotic cells. The protein is V-type proton ATPase 16 kDa proteolipid subunit (VMAC1) of Mesembryanthemum crystallinum (Common ice plant).